The primary structure comprises 223 residues: UPF0441 protein YgiB (223 aa).

Residues 178–195 (TVPKTAMAPKPATTTTVT) show a composition bias toward low complexity. A disordered region spans residues 178-223 (TVPKTAMAPKPATTTTVTRGGFGESVAKQSTMQRSAAGTSTRSMGG). Positions 204-223 (AKQSTMQRSAAGTSTRSMGG) are enriched in polar residues.

The protein belongs to the UPF0441 family.

This is UPF0441 protein YgiB from Salmonella enteritidis PT4 (strain P125109).